The following is a 223-amino-acid chain: Peptidyl-tRNA hydrolase (223 aa).

Tyrosine 16 is a tRNA binding site. Catalysis depends on histidine 21, which acts as the Proton acceptor. The tRNA site is built by phenylalanine 67, asparagine 69, and asparagine 113.

Belongs to the PTH family. Monomer.

Its subcellular location is the cytoplasm. It catalyses the reaction an N-acyl-L-alpha-aminoacyl-tRNA + H2O = an N-acyl-L-amino acid + a tRNA + H(+). In terms of biological role, hydrolyzes ribosome-free peptidyl-tRNAs (with 1 or more amino acids incorporated), which drop off the ribosome during protein synthesis, or as a result of ribosome stalling. Functionally, catalyzes the release of premature peptidyl moieties from peptidyl-tRNA molecules trapped in stalled 50S ribosomal subunits, and thus maintains levels of free tRNAs and 50S ribosomes. In Helicobacter hepaticus (strain ATCC 51449 / 3B1), this protein is Peptidyl-tRNA hydrolase.